Here is a 428-residue protein sequence, read N- to C-terminus: Serine--tRNA ligase (428 aa).

235–237 is an L-serine binding site; that stretch reads TAE. 266–268 is a binding site for ATP; sequence RSE. E289 lines the L-serine pocket. An ATP-binding site is contributed by 353 to 356; the sequence is EISS. S389 provides a ligand contact to L-serine.

The protein belongs to the class-II aminoacyl-tRNA synthetase family. Type-1 seryl-tRNA synthetase subfamily. In terms of assembly, homodimer. The tRNA molecule binds across the dimer.

It localises to the cytoplasm. It carries out the reaction tRNA(Ser) + L-serine + ATP = L-seryl-tRNA(Ser) + AMP + diphosphate + H(+). It catalyses the reaction tRNA(Sec) + L-serine + ATP = L-seryl-tRNA(Sec) + AMP + diphosphate + H(+). It functions in the pathway aminoacyl-tRNA biosynthesis; selenocysteinyl-tRNA(Sec) biosynthesis; L-seryl-tRNA(Sec) from L-serine and tRNA(Sec): step 1/1. Catalyzes the attachment of serine to tRNA(Ser). Is also able to aminoacylate tRNA(Sec) with serine, to form the misacylated tRNA L-seryl-tRNA(Sec), which will be further converted into selenocysteinyl-tRNA(Sec). In Shewanella woodyi (strain ATCC 51908 / MS32), this protein is Serine--tRNA ligase.